A 1177-amino-acid polypeptide reads, in one-letter code: Topoisomerase 1-associated factor 1 (1177 aa).

5 disordered regions span residues 332 to 353 (MDQTKKWNKPRRPGKKVDGEQE), 576 to 598 (KKVAETHGANGDEEGQVSDTEDI), 802 to 830 (ALAAAERPAGEEVAENTEEESPKPPSILV), 893 to 1012 (DPPT…DKDM), and 1028 to 1177 (AFGK…SDSE). Positions 586-597 (GDEEGQVSDTED) are enriched in acidic residues. The span at 893–908 (DPPTYEDGKGPEDLIR) shows a compositional bias: basic and acidic residues. Acidic residues predominate over residues 923–934 (FDDDDEEAENAV). Basic and acidic residues-rich tracts occupy residues 935-955 (EEDHGEYRAGKATERKPDGER) and 975-1001 (KDRRAEARRKKELEKFAKQKSTEFVHD). Acidic residues predominate over residues 1002–1011 (SDEEDDDDKD). The segment covering 1054–1066 (RTKRRKTPPKRKA) has biased composition (basic residues). Acidic residues predominate over residues 1071–1080 (DSDDSDEDVQ). The segment covering 1129-1140 (TTGATASITVKS) has biased composition (polar residues). Acidic residues predominate over residues 1145–1155 (MADDDDEEDEA).

Belongs to the timeless family. In terms of assembly, component of the fork protection complex (FPC) consisting of TOF1 and CSM3.

The protein localises to the nucleus. Functionally, forms a fork protection complex (FPC) with CSM3 and which is required for chromosome segregation during meiosis and DNA damage repair. FPC coordinates leading and lagging strand synthesis and moves with the replication fork. FPC stabilizes replication forks in a configuration that is recognized by replication checkpoint sensors. The protein is Topoisomerase 1-associated factor 1 (TOF1) of Phaeosphaeria nodorum (strain SN15 / ATCC MYA-4574 / FGSC 10173) (Glume blotch fungus).